A 1102-amino-acid chain; its full sequence is PAN2-PAN3 deadenylation complex catalytic subunit PAN2 (1102 aa).

WD repeat units follow at residues 20–59 (DYPR…RYTA), 104–144 (DEME…IVKQ), and 269–308 (NVMS…HFTD). A linker region spans residues 308-445 (DMAIPIEMPK…STDELESLKP (138 aa)). A disordered region spans residues 423–442 (AVPDPKVEQVPESSTDELES). The USP domain maps to 446-833 (EAPPIYRNLE…LPAVLLFQVK (388 aa)). Positions 881–1054 (VGLDTEFVSL…EDARTALKLY (174 aa)) constitute an Exonuclease domain. Residues D884, E886, D993, and D1046 each contribute to the a divalent metal cation site.

Belongs to the peptidase C19 family. PAN2 subfamily. Forms a heterotrimer with an asymmetric homodimer of the regulatory subunit PAN3 to form the poly(A)-nuclease (PAN) deadenylation complex. It depends on a divalent metal cation as a cofactor.

The protein resides in the cytoplasm. It carries out the reaction Exonucleolytic cleavage of poly(A) to 5'-AMP.. Its activity is regulated as follows. Positively regulated by the regulatory subunit PAN3. Catalytic subunit of the poly(A)-nuclease (PAN) deadenylation complex, one of two cytoplasmic mRNA deadenylases involved in mRNA turnover. PAN specifically shortens poly(A) tails of RNA and the activity is stimulated by poly(A)-binding protein PAB1. PAN deadenylation is followed by rapid degradation of the shortened mRNA tails by the CCR4-NOT complex. Deadenylated mRNAs are then degraded by two alternative mechanisms, namely exosome-mediated 3'-5' exonucleolytic degradation, or deadenylation-dependent mRNA decaping and subsequent 5'-3' exonucleolytic degradation by XRN1. May also be involved in post-transcriptional maturation of mRNA poly(A) tails. The polypeptide is PAN2-PAN3 deadenylation complex catalytic subunit PAN2 (Chaetomium globosum (strain ATCC 6205 / CBS 148.51 / DSM 1962 / NBRC 6347 / NRRL 1970) (Soil fungus)).